Reading from the N-terminus, the 182-residue chain is Adenylate kinase (182 aa).

12–17 (GAGKGT) contacts ATP. Residues 32–61 (STGDLLRDEVSSGSVLGIKAAEIMNKGELV) form an NMP region. AMP is bound by residues threonine 33, arginine 38, 59 to 61 (ELV), 85 to 88 (GFPR), and glutamine 92. An LID region spans residues 126–132 (ERGRQDD). Position 127 (arginine 127) interacts with ATP. 2 residues coordinate AMP: arginine 129 and arginine 140. Alanine 168 is an ATP binding site.

This sequence belongs to the adenylate kinase family. As to quaternary structure, monomer.

The protein localises to the cytoplasm. It catalyses the reaction AMP + ATP = 2 ADP. The protein operates within purine metabolism; AMP biosynthesis via salvage pathway; AMP from ADP: step 1/1. Functionally, catalyzes the reversible transfer of the terminal phosphate group between ATP and AMP. Plays an important role in cellular energy homeostasis and in adenine nucleotide metabolism. This Prochlorococcus marinus (strain NATL1A) protein is Adenylate kinase.